Reading from the N-terminus, the 347-residue chain is Endophilin-A3 (347 aa).

Positions 1 to 21 (MSVAGLKKQFHKASQLFSEKI) are membrane-binding amphipathic helix. Positions 18 to 249 (SEKISGAEGT…LELRIALASQ (232 aa)) constitute a BAR domain. Residues 60 to 87 (PNPAYRAKLGMLNTMSKLRGQVKATGYP) are required for dimerization upon membrane association. Residues 180–201 (EEEIRQAVEKFEESKELAERSM) adopt a coiled-coil conformation. Residues 218–254 (FVEAALDYHRQSTEILQELQNKLELRIALASQVPRRD) are interaction with ARC. The disordered stretch occupies residues 255-284 (YMPKPVNTSSTNANGVEPSSSSKLTGTDIP). Residues 260 to 284 (VNTSSTNANGVEPSSSSKLTGTDIP) show a composition bias toward polar residues. Residues 285 to 344 (SDQPCCRGLYDFEPENEGELGFKEGDIITLTNQIDENWYEGMLRGESGFFPINYVEVIVP) form the SH3 domain.

It belongs to the endophilin family. As to quaternary structure, interacts with SGIP1 and DYDC1. Interacts with FASLG. Interacts with ATXN2. Interacts with BIN2. Interacts with ARC, DNM1 and SYNJ1. Expressed at high level in testis and at lower level in brain and liver.

Its subcellular location is the cytoplasm. The protein resides in the early endosome membrane. Its function is as follows. Implicated in endocytosis. May recruit other proteins to membranes with high curvature. The polypeptide is Endophilin-A3 (Sh3gl3) (Rattus norvegicus (Rat)).